Consider the following 901-residue polypeptide: Protein translocase subunit SecA (901 aa).

Residues Gln-87, 105 to 109 (GEGKT), and Asp-512 each bind ATP. The Zn(2+) site is built by Cys-885, Cys-887, Cys-896, and His-897.

It belongs to the SecA family. In terms of assembly, monomer and homodimer. Part of the essential Sec protein translocation apparatus which comprises SecA, SecYEG and auxiliary proteins SecDF-YajC and YidC. Zn(2+) is required as a cofactor.

The protein localises to the cell inner membrane. Its subcellular location is the cytoplasm. The enzyme catalyses ATP + H2O + cellular proteinSide 1 = ADP + phosphate + cellular proteinSide 2.. Part of the Sec protein translocase complex. Interacts with the SecYEG preprotein conducting channel. Has a central role in coupling the hydrolysis of ATP to the transfer of proteins into and across the cell membrane, serving both as a receptor for the preprotein-SecB complex and as an ATP-driven molecular motor driving the stepwise translocation of polypeptide chains across the membrane. This Salmonella paratyphi A (strain ATCC 9150 / SARB42) protein is Protein translocase subunit SecA.